A 125-amino-acid chain; its full sequence is Multifunctional methyltransferase subunit TRM112-like protein (125 aa).

One can recognise a TRM112 domain in the interval 2–121 (KLFVHNFMSS…RDGIPNMLKV (120 aa)).

This sequence belongs to the TRM112 family.

Its subcellular location is the nucleus. The protein localises to the nucleoplasm. It is found in the cytoplasm. The protein resides in the perinuclear region. Acts as an activator of both RNA and protein methyltransferases. The chain is Multifunctional methyltransferase subunit TRM112-like protein from Caenorhabditis elegans.